Here is a 320-residue protein sequence, read N- to C-terminus: Malate dehydrogenase (320 aa).

Residues 10 to 15 (GSGMIG) and Asp-34 contribute to the NAD(+) site. Arg-83 and Arg-89 together coordinate substrate. Residues Asn-96 and 119-121 (ITN) contribute to the NAD(+) site. 2 residues coordinate substrate: Asn-121 and Arg-152. The Proton acceptor role is filled by His-176.

This sequence belongs to the LDH/MDH superfamily. MDH type 3 family.

The catalysed reaction is (S)-malate + NAD(+) = oxaloacetate + NADH + H(+). Functionally, catalyzes the reversible oxidation of malate to oxaloacetate. The protein is Malate dehydrogenase of Allorhizobium ampelinum (strain ATCC BAA-846 / DSM 112012 / S4) (Agrobacterium vitis (strain S4)).